Reading from the N-terminus, the 285-residue chain is MFKDFFNRSKKKKYLTVQDSKQNDVPAGIMTKCPNCKKIMYTKELNENLNVCFNCDHHIALTAYKRIEAISDDGSFIEFDRGMTSANPLDFPGYEEKIEKDQQKTGLNEALVSGTAKLDGIQYGVAVMDARFRMGSMGSVVGEKICRIIDYCTEHRLPFILFSASGGARMQEGIISLMQMGKTSVSLKRHSDAGLLYISYITNPTTGGVSASFASVGDINLSEPKALIGFAGRRVIEQTINEKLPDDFQTAEFLLEHGQLDKVIHRKDMRETLSNILKIHQEVSN.

The region spanning 29–285 (IMTKCPNCKK…ILKIHQEVSN (257 aa)) is the CoA carboxyltransferase N-terminal domain. Zn(2+) contacts are provided by cysteine 33, cysteine 36, cysteine 52, and cysteine 55. A C4-type zinc finger spans residues 33 to 55 (CPNCKKIMYTKELNENLNVCFNC).

The protein belongs to the AccD/PCCB family. As to quaternary structure, acetyl-CoA carboxylase is a heterohexamer composed of biotin carboxyl carrier protein (AccB), biotin carboxylase (AccC) and two subunits each of ACCase subunit alpha (AccA) and ACCase subunit beta (AccD). Zn(2+) serves as cofactor.

Its subcellular location is the cytoplasm. The enzyme catalyses N(6)-carboxybiotinyl-L-lysyl-[protein] + acetyl-CoA = N(6)-biotinyl-L-lysyl-[protein] + malonyl-CoA. Its pathway is lipid metabolism; malonyl-CoA biosynthesis; malonyl-CoA from acetyl-CoA: step 1/1. In terms of biological role, component of the acetyl coenzyme A carboxylase (ACC) complex. Biotin carboxylase (BC) catalyzes the carboxylation of biotin on its carrier protein (BCCP) and then the CO(2) group is transferred by the transcarboxylase to acetyl-CoA to form malonyl-CoA. This chain is Acetyl-coenzyme A carboxylase carboxyl transferase subunit beta, found in Staphylococcus epidermidis (strain ATCC 35984 / DSM 28319 / BCRC 17069 / CCUG 31568 / BM 3577 / RP62A).